The primary structure comprises 725 residues: Glutamine-dependent NAD(+) synthetase (725 aa).

The 271-residue stretch at 4–274 (LKVATCNLNQ…VEVIISQVDL (271 aa)) folds into the CN hydrolase domain. Residue E44 is the Proton acceptor; for glutaminase activity of the active site. K113 serves as the catalytic For glutaminase activity. The active-site Nucleophile; for glutaminase activity is the C174. A ligase region spans residues 324–709 (YHSPQEEIAF…FPEEEANSNK (386 aa)). 354–361 (PLSGGADS) serves as a coordination point for ATP. S356 is an active-site residue.

This sequence in the C-terminal section; belongs to the NAD synthetase family.

It catalyses the reaction deamido-NAD(+) + L-glutamine + ATP + H2O = L-glutamate + AMP + diphosphate + NAD(+) + H(+). It functions in the pathway cofactor biosynthesis; NAD(+) biosynthesis; NAD(+) from deamido-NAD(+) (L-Gln route): step 1/1. The polypeptide is Glutamine-dependent NAD(+) synthetase (Arabidopsis thaliana (Mouse-ear cress)).